The primary structure comprises 245 residues: Caffeoyl-CoA O-methyltransferase (245 aa).

Residue lysine 19 participates in substrate binding. Residues threonine 61, glutamate 83, 85 to 86 (GV), serine 91, aspartate 109, and alanine 138 contribute to the S-adenosyl-L-methionine site. Aspartate 161 serves as a coordination point for substrate. Residue aspartate 161 participates in a divalent metal cation binding. Aspartate 163 serves as a coordination point for S-adenosyl-L-methionine. Residues aspartate 187 and asparagine 188 each contribute to the a divalent metal cation site. Asparagine 192 provides a ligand contact to substrate.

It belongs to the class I-like SAM-binding methyltransferase superfamily. Cation-dependent O-methyltransferase family. CCoAMT subfamily. A divalent metal cation serves as cofactor.

It catalyses the reaction (E)-caffeoyl-CoA + S-adenosyl-L-methionine = (E)-feruloyl-CoA + S-adenosyl-L-homocysteine + H(+). It participates in aromatic compound metabolism; phenylpropanoid biosynthesis. Functionally, methylates caffeoyl-CoA to feruloyl-CoA and 5-hydroxyferuloyl-CoA to sinapoyl-CoA. Plays a role in the synthesis of feruloylated polysaccharides. Involved in the reinforcement of the plant cell wall. Also involved in the responding to wounding or pathogen challenge by the increased formation of cell wall-bound ferulic acid polymers. This Zinnia elegans (Garden zinnia) protein is Caffeoyl-CoA O-methyltransferase (CCOAOMT).